Reading from the N-terminus, the 200-residue chain is Potassium-transporting ATPase KdpC subunit (200 aa).

The chain crosses the membrane as a helical span at residues 6–26; it reads PALVLLILLTLITGIAYPLLT.

This sequence belongs to the KdpC family. The system is composed of three essential subunits: KdpA, KdpB and KdpC.

It is found in the cell inner membrane. In terms of biological role, part of the high-affinity ATP-driven potassium transport (or Kdp) system, which catalyzes the hydrolysis of ATP coupled with the electrogenic transport of potassium into the cytoplasm. This subunit acts as a catalytic chaperone that increases the ATP-binding affinity of the ATP-hydrolyzing subunit KdpB by the formation of a transient KdpB/KdpC/ATP ternary complex. The sequence is that of Potassium-transporting ATPase KdpC subunit from Yersinia pseudotuberculosis serotype O:1b (strain IP 31758).